The primary structure comprises 908 residues: MADGVIARLMSGGRGARSFYEELRGRDNVSDVDDRAGLLDEENLNQHFNDYDLENAEGLRLEDSRATVDGRIPRGRAQLSGRPPRPAATTHWGTSHDDDGDNDVPASLLVERYDRGAAPLGSPGKPRSQHAGSRAHPAPGLSKGRTHQQRPHIDQELQPPLHSDAAPSSLLAGAITGNAKKMAEWRWANITNLDSFMQDVYSYYRGSGMWCIVVERVLHLIKVAFVAFLLTFLSQCVDFKKIPSNQKLSQVLVPQCTRNMSGLWNIGLWLFAFYFMWKSIQYILDLRRLTHVRDFYIHLLNIPDEDMQTITWQEVVARIMVLRDQNVRTTRTITPQNQRWVLGSQSKERLDASDIANRLMRRENYMIAMINKDILDLTIPLPILRNRQLLSQTLEWTLMFSILDFVFDPKGQVHQEFLRSDRRGILSAKLRSRFIFAGVMILILSPFVAGYLIIVYFLEYYNEIQKNPSILSARSYTPLAEWKFREFNELPHLFKRRLDMSHPFASHYIDQFPKAKTSMVAKTVSFIAGSIATVLALISVFDPEMFLGFEITHDRTVLFYTAVFGAIWSVARGSVSEDNAVFDPEYALGNVVEYTHYQPEHWKDRWHSADVKAEFEELYKLKLVIFIEEILSILTTPFVLFFSLPKSADQIIDFFREFTIHVDGLGYVCYFAEFDFKKGSKSQAPAATAGEGDVRDDYYSTKHGKMEASMYGFINNYARNPKHLPPAMRQQFHLPPVFPGITSPTLAGDLAASRMGRSQRGRSKGPLPSRTPRPGAVMAEPSPMASILLDPRHQPIFPNNMSFVNTGHQFRGGNQGDGHMMGGGSMEEDVKGAARHGQQTHDDESEDSRAGLDESAWQVSPTKDLSRENSGRGLDSVVGEEAGNGAGVVHMLYQFNQAHLNRRLGGVR.

Over 1–216 (MADGVIARLM…SGMWCIVVER (216 aa)) the chain is Cytoplasmic. The tract at residues 64 to 162 (SRATVDGRIP…IDQELQPPLH (99 aa)) is disordered. A helical membrane pass occupies residues 217 to 237 (VLHLIKVAFVAFLLTFLSQCV). The Lumenal segment spans residues 238–259 (DFKKIPSNQKLSQVLVPQCTRN). The N-linked (GlcNAc...) asparagine glycan is linked to asparagine 259. A helical transmembrane segment spans residues 260–280 (MSGLWNIGLWLFAFYFMWKSI). Topologically, residues 281–433 (QYILDLRRLT…GILSAKLRSR (153 aa)) are cytoplasmic. Residues 434–454 (FIFAGVMILILSPFVAGYLII) lie within the membrane without spanning it. Residues 455-525 (VYFLEYYNEI…KTSMVAKTVS (71 aa)) are Cytoplasmic-facing. A helical membrane pass occupies residues 526–546 (FIAGSIATVLALISVFDPEMF). At 547–555 (LGFEITHDR) the chain is on the lumenal side. Residues 556-576 (TVLFYTAVFGAIWSVARGSVS) traverse the membrane as a helical segment. Residues 577–622 (EDNAVFDPEYALGNVVEYTHYQPEHWKDRWHSADVKAEFEELYKLK) are Cytoplasmic-facing. Residues 623 to 643 (LVIFIEEILSILTTPFVLFFS) lie within the membrane without spanning it. At 644-908 (LPKSADQIID…HLNRRLGGVR (265 aa)) the chain is on the cytoplasmic side. 2 disordered regions span residues 751–779 (AASR…AVMA) and 809–878 (QFRG…DSVV). Positions 813 to 825 (GNQGDGHMMGGGS) are enriched in gly residues. Positions 839 to 852 (QTHDDESEDSRAGL) are enriched in basic and acidic residues.

Belongs to the ATG9 family. In terms of assembly, homotrimer; forms a homotrimer with a central pore that forms a path between the two membrane leaflets. In terms of processing, phosphorylated by apg-1. Apg-1 phosphorylation is required for preautophagosome elongation.

Its subcellular location is the preautophagosomal structure membrane. The protein localises to the cytoplasmic vesicle membrane. It is found in the golgi apparatus membrane. It localises to the endoplasmic reticulum membrane. The catalysed reaction is a 1,2-diacyl-sn-glycero-3-phosphocholine(in) = a 1,2-diacyl-sn-glycero-3-phosphocholine(out). It carries out the reaction a 1,2-diacyl-sn-glycero-3-phospho-L-serine(in) = a 1,2-diacyl-sn-glycero-3-phospho-L-serine(out). The enzyme catalyses a 1,2-diacyl-sn-glycero-3-phosphoethanolamine(in) = a 1,2-diacyl-sn-glycero-3-phosphoethanolamine(out). It catalyses the reaction a 1,2-diacyl-sn-glycero-3-phospho-(1D-myo-inositol-3-phosphate)(in) = a 1,2-diacyl-sn-glycero-3-phospho-(1D-myo-inositol-3-phosphate)(out). Phospholipid scramblase involved in autophagy and cytoplasm to vacuole transport (Cvt) vesicle formation. Cycles between the preautophagosomal structure/phagophore assembly site (PAS) and the cytoplasmic vesicle pool and supplies membrane for the growing autophagosome. Lipid scramblase activity plays a key role in preautophagosomal structure/phagophore assembly by distributing the phospholipids that arrive through atg-2 from the cytoplasmic to the luminal leaflet of the bilayer, thereby driving autophagosomal membrane expansion. Required for mitophagy. Also involved in endoplasmic reticulum-specific autophagic process and is essential for the survival of cells subjected to severe ER stress. Different machineries are required for anterograde trafficking to the PAS during either the Cvt pathway or bulk autophagy and for retrograde trafficking. The protein is Autophagy-related protein 9 (apg-7) of Neurospora crassa (strain ATCC 24698 / 74-OR23-1A / CBS 708.71 / DSM 1257 / FGSC 987).